An 895-amino-acid chain; its full sequence is ABC-transporter-regulating transcription factor (895 aa).

The zn(2)-C6 fungal-type DNA-binding region spans 69-96 (CDMCRKKKIKCDGKMPKCSHCTNYKTDC). Residues 156-218 (HASGSNTPHN…QKESETEVEG (63 aa)) form a disordered region. A compositionally biased stretch (polar residues) spans 158–207 (SGSNTPHNPQKINIPSQSQIAMSQQNSSSHYSTPRLESQSSPRTAATSPE). A helical transmembrane segment spans residues 648–668 (CVWLILYYPVSALVTLFANIL). The interval 726–813 (ESYSKKKRKS…TGVSTNIPPN (88 aa)) is disordered. Residues 755–765 (PSTTQPTQAPS) are compositionally biased toward low complexity.

In terms of assembly, interacts with ncaA.

The protein resides in the nucleus. It is found in the membrane. Transcription factor that regulates expression of the genes related to ergosterol biosynthesis, including erg3B, erg24A, erg25A, as well as cyp51A that encodes a target protein of azoles. In coordination with ffmA and ncaA, is responsible for the expression of the ABC transporter abcC/cdr1B/abcG1 related to azole resistance. Directly binds both the cyp51A and abcC/cdr1B/abcG1 promoters at a conserved 34 bp region called the atrR response element (ATRE). AtrR also binds to the promoter regions of both the sterol response transcription factor srbA and atrR genes themselves, the latter suggesting the possibility that atrR is autoregulated. Also regulates iron uptake, most likely via cooperation with SrbA. AtrR is necessary for hypoxia adaptation and virulence. This is ABC-transporter-regulating transcription factor from Aspergillus fumigatus (strain ATCC MYA-4609 / CBS 101355 / FGSC A1100 / Af293) (Neosartorya fumigata).